Here is a 910-residue protein sequence, read N- to C-terminus: Protein translocase subunit SecA (910 aa).

Residues Q87, 105–109 (GEGKT), and D501 contribute to the ATP site. Zn(2+) contacts are provided by C894, C896, C905, and H906.

Belongs to the SecA family. As to quaternary structure, monomer and homodimer. Part of the essential Sec protein translocation apparatus which comprises SecA, SecYEG and auxiliary proteins SecDF-YajC and YidC. Zn(2+) is required as a cofactor.

It localises to the cell inner membrane. The protein resides in the cytoplasm. It catalyses the reaction ATP + H2O + cellular proteinSide 1 = ADP + phosphate + cellular proteinSide 2.. Its function is as follows. Part of the Sec protein translocase complex. Interacts with the SecYEG preprotein conducting channel. Has a central role in coupling the hydrolysis of ATP to the transfer of proteins into and across the cell membrane, serving both as a receptor for the preprotein-SecB complex and as an ATP-driven molecular motor driving the stepwise translocation of polypeptide chains across the membrane. The chain is Protein translocase subunit SecA from Acidiphilium cryptum (strain JF-5).